The chain runs to 321 residues: Cytochrome c biogenesis protein CcsA (321 aa).

The next 8 membrane-spanning stretches (helical) occupy residues 17–37 (VVSI…FVGL), 48–68 (TFFC…HLPI), 71–91 (LYES…VPYF), 98–118 (LSTI…WGLL), 143–163 (MVSG…LLVI), 225–245 (ILSI…VWAN), 259–273 (TWAF…IYFH), and 286–306 (AIVA…VNLL).

Belongs to the CcmF/CycK/Ccl1/NrfE/CcsA family. As to quaternary structure, may interact with Ccs1.

It localises to the plastid. Its subcellular location is the chloroplast thylakoid membrane. Functionally, required during biogenesis of c-type cytochromes (cytochrome c6 and cytochrome f) at the step of heme attachment. The chain is Cytochrome c biogenesis protein CcsA from Populus trichocarpa (Western balsam poplar).